We begin with the raw amino-acid sequence, 102 residues long: Pyrimidine/purine nucleoside phosphorylase (102 aa).

This sequence belongs to the nucleoside phosphorylase PpnP family.

The catalysed reaction is a purine D-ribonucleoside + phosphate = a purine nucleobase + alpha-D-ribose 1-phosphate. The enzyme catalyses adenosine + phosphate = alpha-D-ribose 1-phosphate + adenine. It catalyses the reaction cytidine + phosphate = cytosine + alpha-D-ribose 1-phosphate. It carries out the reaction guanosine + phosphate = alpha-D-ribose 1-phosphate + guanine. The catalysed reaction is inosine + phosphate = alpha-D-ribose 1-phosphate + hypoxanthine. The enzyme catalyses thymidine + phosphate = 2-deoxy-alpha-D-ribose 1-phosphate + thymine. It catalyses the reaction uridine + phosphate = alpha-D-ribose 1-phosphate + uracil. It carries out the reaction xanthosine + phosphate = alpha-D-ribose 1-phosphate + xanthine. In terms of biological role, catalyzes the phosphorolysis of diverse nucleosides, yielding D-ribose 1-phosphate and the respective free bases. Can use uridine, adenosine, guanosine, cytidine, thymidine, inosine and xanthosine as substrates. Also catalyzes the reverse reactions. This Shewanella amazonensis (strain ATCC BAA-1098 / SB2B) protein is Pyrimidine/purine nucleoside phosphorylase.